A 138-amino-acid polypeptide reads, in one-letter code: Large ribosomal subunit protein uL16 (138 aa).

The span at 1–16 (MLIPRKVAHRKQHHPG) shows a compositional bias: basic residues. Residues 1 to 24 (MLIPRKVAHRKQHHPGRTGAAKGG) form a disordered region.

It belongs to the universal ribosomal protein uL16 family. As to quaternary structure, part of the 50S ribosomal subunit.

Its function is as follows. Binds 23S rRNA and is also seen to make contacts with the A and possibly P site tRNAs. The sequence is that of Large ribosomal subunit protein uL16 from Frankia alni (strain DSM 45986 / CECT 9034 / ACN14a).